Consider the following 76-residue polypeptide: Small ribosomal subunit protein uS17 (76 aa).

This sequence belongs to the universal ribosomal protein uS17 family. Part of the 30S ribosomal subunit.

In terms of biological role, one of the primary rRNA binding proteins, it binds specifically to the 5'-end of 16S ribosomal RNA. The chain is Small ribosomal subunit protein uS17 from Ruegeria sp. (strain TM1040) (Silicibacter sp.).